We begin with the raw amino-acid sequence, 74 residues long: ATP synthase subunit c (74 aa).

The next 2 membrane-spanning stretches (helical) occupy residues 8–28 (FIGI…VSNI) and 52–72 (IGAG…MLLI).

Belongs to the ATPase C chain family. In terms of assembly, F-type ATPases have 2 components, F(1) - the catalytic core - and F(0) - the membrane proton channel. F(1) has five subunits: alpha(3), beta(3), gamma(1), delta(1), epsilon(1). F(0) has three main subunits: a(1), b(2) and c(10-14). The alpha and beta chains form an alternating ring which encloses part of the gamma chain. F(1) is attached to F(0) by a central stalk formed by the gamma and epsilon chains, while a peripheral stalk is formed by the delta and b chains.

The protein localises to the cell inner membrane. Its function is as follows. F(1)F(0) ATP synthase produces ATP from ADP in the presence of a proton or sodium gradient. F-type ATPases consist of two structural domains, F(1) containing the extramembraneous catalytic core and F(0) containing the membrane proton channel, linked together by a central stalk and a peripheral stalk. During catalysis, ATP synthesis in the catalytic domain of F(1) is coupled via a rotary mechanism of the central stalk subunits to proton translocation. In terms of biological role, key component of the F(0) channel; it plays a direct role in translocation across the membrane. A homomeric c-ring of between 10-14 subunits forms the central stalk rotor element with the F(1) delta and epsilon subunits. The polypeptide is ATP synthase subunit c (Rickettsia akari (strain Hartford)).